The following is a 429-amino-acid chain: Patatin-like phospholipase domain-containing protein 5 (429 aa).

Residues 12-181 (LSFSGAGYLG…SNNLPFADCP (170 aa)) form the PNPLA domain. The GXGXXG signature appears at 16–21 (GAGYLG). The GXSXG signature appears at 47 to 51 (GSSSG). Residue serine 49 is the Nucleophile of the active site. The active-site Proton acceptor is aspartate 168. The DGA/G signature appears at 168–170 (DGA).

As to expression, expressed in brain and pituitary gland.

It carries out the reaction a triacylglycerol + H2O = a diacylglycerol + a fatty acid + H(+). Has abundant triacylglycerol lipase activity. This is Patatin-like phospholipase domain-containing protein 5 from Homo sapiens (Human).